Consider the following 63-residue polypeptide: ATP synthase F(0) complex subunit 8 (63 aa).

The helical transmembrane segment at 8 to 24 (TWFLTILSVMLTLFTLL) threads the bilayer. At Lys57 the chain carries N6-acetyllysine.

The protein belongs to the ATPase protein 8 family. Component of the ATP synthase complex composed at least of ATP5F1A/subunit alpha, ATP5F1B/subunit beta, ATP5MC1/subunit c (homooctomer), MT-ATP6/subunit a, MT-ATP8/subunit 8, ATP5ME/subunit e, ATP5MF/subunit f, ATP5MG/subunit g, ATP5MK/subunit k, ATP5MJ/subunit j, ATP5F1C/subunit gamma, ATP5F1D/subunit delta, ATP5F1E/subunit epsilon, ATP5PF/subunit F6, ATP5PB/subunit b, ATP5PD/subunit d, ATP5PO/subunit OSCP. ATP synthase complex consists of a soluble F(1) head domain (subunits alpha(3) and beta(3)) - the catalytic core - and a membrane F(0) domain - the membrane proton channel (subunits c, a, 8, e, f, g, k and j). These two domains are linked by a central stalk (subunits gamma, delta, and epsilon) rotating inside the F1 region and a stationary peripheral stalk (subunits F6, b, d, and OSCP). Interacts with PRICKLE3.

It localises to the mitochondrion membrane. Its function is as follows. Subunit 8, of the mitochondrial membrane ATP synthase complex (F(1)F(0) ATP synthase or Complex V) that produces ATP from ADP in the presence of a proton gradient across the membrane which is generated by electron transport complexes of the respiratory chain. ATP synthase complex consist of a soluble F(1) head domain - the catalytic core - and a membrane F(1) domain - the membrane proton channel. These two domains are linked by a central stalk rotating inside the F(1) region and a stationary peripheral stalk. During catalysis, ATP synthesis in the catalytic domain of F(1) is coupled via a rotary mechanism of the central stalk subunits to proton translocation. In vivo, can only synthesize ATP although its ATP hydrolase activity can be activated artificially in vitro. Part of the complex F(0) domain. The chain is ATP synthase F(0) complex subunit 8 from Physeter macrocephalus (Sperm whale).